The chain runs to 298 residues: Single myb histone 2 (298 aa).

Positions 1–61 (MGVPKQRWTP…KWRNLSVTAG (61 aa)) constitute an HTH myb-type domain. Residues 28–57 (WRTILRDSDFSALLRLRSNVDLKDKWRNLS) constitute a DNA-binding region (H-T-H motif). An H15 domain is found at 124–192 (SVARLDDLIV…KVNQKYRIAP (69 aa)). Positions 237 to 278 (EEAAAFAAKAVAEAEVAMAEAEEAARVAEAAENDAEAAKAFL) form a coiled coil.

The protein belongs to the histone H1/H5 family. SMH subfamily. Forms a homodimer and heterodimers.

It is found in the nucleus. Its subcellular location is the chromosome. The protein resides in the nucleolus. It localises to the telomere. Functionally, binds preferentially double-stranded telomeric repeats, but may also bind to the single telomeric strand. This is Single myb histone 2 (SMH2) from Zea mays (Maize).